The chain runs to 900 residues: Alanine--tRNA ligase (900 aa).

The Zn(2+) site is built by His-580, His-584, Cys-683, and His-687.

It belongs to the class-II aminoacyl-tRNA synthetase family. Zn(2+) is required as a cofactor.

It localises to the cytoplasm. It carries out the reaction tRNA(Ala) + L-alanine + ATP = L-alanyl-tRNA(Ala) + AMP + diphosphate. Catalyzes the attachment of alanine to tRNA(Ala) in a two-step reaction: alanine is first activated by ATP to form Ala-AMP and then transferred to the acceptor end of tRNA(Ala). Also edits incorrectly charged Ser-tRNA(Ala) and Gly-tRNA(Ala) via its editing domain. The sequence is that of Alanine--tRNA ligase from Mycolicibacterium paratuberculosis (strain ATCC BAA-968 / K-10) (Mycobacterium paratuberculosis).